The primary structure comprises 346 residues: Probable alpha-1,2-galactosyltransferase gmh2 (346 aa).

The Cytoplasmic portion of the chain corresponds to 1–11; it reads MALMLSRIPRR. A helical; Signal-anchor for type II membrane protein membrane pass occupies residues 12 to 32; the sequence is FFFLFLTVGLIAGAFLYSLIY. Residues 33–346 are Lumenal-facing; that stretch reads FVDVDLVSKV…LWQKFYALID (314 aa). N64, N142, and N224 each carry an N-linked (GlcNAc...) asparagine glycan.

The protein belongs to the glycosyltransferase 34 family.

The protein localises to the golgi apparatus membrane. In Schizosaccharomyces pombe (strain 972 / ATCC 24843) (Fission yeast), this protein is Probable alpha-1,2-galactosyltransferase gmh2 (gmh2).